The following is a 474-amino-acid chain: Dol-P-Glc:Glc(2)Man(9)GlcNAc(2)-PP-Dol alpha-1,2-glucosyltransferase (474 aa).

Residues 1–6 lie on the Cytoplasmic side of the membrane; sequence MAQLEG. The chain crosses the membrane as a helical span at residues 7–27; the sequence is YYFSAALSCTFLVSCLLFSAF. Residues 28 to 64 are Extracellular-facing; that stretch reads SRALREPYMDEIFHLPQAQRYCEGRFSLSQWDPMITT. A helical transmembrane segment spans residues 65–85; the sequence is LPGLYLVSVGVVKPASWLLGW. The Cytoplasmic segment spans residues 86-97; that stretch reads SEHVICSIGVLR. A helical membrane pass occupies residues 98-118; the sequence is FVNLLFSVGNFYLLYLLFRKV. Topologically, residues 119–126 are extracellular; it reads QPRNKASS. Residues 127–147 form a helical membrane-spanning segment; sequence SIQRILSTLTLAVFPTLYFFN. The Cytoplasmic segment spans residues 148 to 150; sequence FLY. Residues 151–171 traverse the membrane as a helical segment; it reads YTEAGSVFFTLFAYLMCLYGN. The Extracellular portion of the chain corresponds to 172 to 175; sequence HRTS. The helical transmembrane segment at 176 to 196 threads the bilayer; sequence ALLGFCGFMFRQTNIIWAAFC. The Cytoplasmic portion of the chain corresponds to 197-256; the sequence is AGHLIAQKCSEAWKIELQKKKEERLAPTKGPLSELRRVLQFLLVYAMSLKNLRMLFLLTW. Residues 257-277 traverse the membrane as a helical segment; it reads PYVLLLLAFFAFVVVNGGIVV. The Extracellular segment spans residues 278-283; the sequence is GDRSSH. The chain crosses the membrane as a helical span at residues 284–304; it reads EACLHFPQLFYFFSFTAFFSF. Residues 305 to 317 are Cytoplasmic-facing; it reads PHLLSLTKVKTFL. A helical transmembrane segment spans residues 318–338; sequence SLVWKRRVQFSVVTLVSILLV. Residues 339–365 lie on the Extracellular side of the membrane; sequence WKFTYVHKYLLADNRHYTFYVWKRVFQ. The helical transmembrane segment at 366 to 386 threads the bilayer; the sequence is RHEVVKYLLVPAYIFAGWAIA. Residues 387–392 lie on the Cytoplasmic side of the membrane; the sequence is DSLKAK. A helical transmembrane segment spans residues 393–413; that stretch reads SIFWNLMFFVCLVASTVPQKL. Topologically, residues 414–436 are extracellular; sequence LEFRYFILPYIIYRLNIPLPPIS. Residues 437–457 form a helical membrane-spanning segment; it reads RLVCELGCYTVVNFVTFYIFL. Residues 458 to 473 lie on the Cytoplasmic side of the membrane; it reads NKTFQWPNSQDIQRFM.

Belongs to the ALG10 glucosyltransferase family. As to quaternary structure, interacts with KCNH1; may regulate KCNH1, possibly by regulating its N-glycosylation. Interacts with KCNH2; may reduce KCNH2 sensitivity to classic proarrhythmic drug blockade, possibly by regulating its N-glycosylation.

The protein localises to the endoplasmic reticulum membrane. It carries out the reaction an alpha-D-Glc-(1-&gt;3)-alpha-D-Glc-(1-&gt;3)-alpha-D-Man-(1-&gt;2)-alpha-D-Man-(1-&gt;2)-alpha-D-Man-(1-&gt;3)-[alpha-D-Man-(1-&gt;2)-alpha-D-Man-(1-&gt;3)-[alpha-D-Man-(1-&gt;2)-alpha-D-Man-(1-&gt;6)]-alpha-D-Man-(1-&gt;6)]-beta-D-Man-(1-&gt;4)-beta-D-GlcNAc-(1-&gt;4)-alpha-D-GlcNAc-diphospho-di-trans,poly-cis-dolichol + a di-trans,poly-cis-dolichyl beta-D-glucosyl phosphate = a alpha-D-Glc-(1-&gt;2)-alpha-D-Glc-(1-&gt;3)-alpha-D-Glc-(1-&gt;3)-alpha-D-Man-(1-&gt;2)-alpha-D-Man-(1-&gt;2)-alpha-D-Man-(1-&gt;3)-[alpha-D-Man-(1-&gt;2)-alpha-D-Man-(1-&gt;3)-[alpha-D-Man-(1-&gt;2)-alpha-D-Man-(1-&gt;6)]-alpha-D-Man-(1-&gt;6)]-beta-D-Man-(1-&gt;4)-beta-D-GlcNAc-(1-&gt;4)-alpha-D-GlcNAc-diphospho-di-trans,poly-cis-dolichol + a di-trans,poly-cis-dolichyl phosphate + H(+). The protein operates within protein modification; protein glycosylation. In terms of biological role, dol-P-Glc:Glc(2)Man(9)GlcNAc(2)-PP-Dol alpha-1,2-glucosyltransferase that operates in the biosynthetic pathway of dolichol-linked oligosaccharides, the glycan precursors employed in protein asparagine (N)-glycosylation. The assembly of dolichol-linked oligosaccharides begins on the cytosolic side of the endoplasmic reticulum membrane and finishes in its lumen. The sequential addition of sugars to dolichol pyrophosphate produces dolichol-linked oligosaccharides containing fourteen sugars, including two GlcNAcs, nine mannoses and three glucoses. Once assembled, the oligosaccharide is transferred from the lipid to nascent proteins by oligosaccharyltransferases. In the lumen of the endoplasmic reticulum, adds the third and last glucose residue from dolichyl phosphate glucose (Dol-P-Glc) onto the lipid-linked oligosaccharide intermediate Glc(2)Man(9)GlcNAc(2)-PP-Dol to produce Glc(3)Man(9)GlcNAc(2)-PP-Dol. This is Dol-P-Glc:Glc(2)Man(9)GlcNAc(2)-PP-Dol alpha-1,2-glucosyltransferase from Mus musculus (Mouse).